The chain runs to 182 residues: ATP synthase subunit delta, organellar chromatophore (182 aa).

It belongs to the ATPase delta chain family. F-type ATPases have 2 components, F(1) - the catalytic core - and F(0) - the membrane proton channel. F(1) has five subunits: alpha(3), beta(3), gamma(1), delta(1), epsilon(1). CF(0) has four main subunits: a(1), b(1), b'(1) and c(10-14). The alpha and beta chains form an alternating ring which encloses part of the gamma chain. F(1) is attached to F(0) by a central stalk formed by the gamma and epsilon chains, while a peripheral stalk is formed by the delta, b and b' chains.

The protein resides in the plastid. It localises to the organellar chromatophore thylakoid membrane. In terms of biological role, f(1)F(0) ATP synthase produces ATP from ADP in the presence of a proton or sodium gradient. F-type ATPases consist of two structural domains, F(1) containing the extramembraneous catalytic core and F(0) containing the membrane proton channel, linked together by a central stalk and a peripheral stalk. During catalysis, ATP synthesis in the catalytic domain of F(1) is coupled via a rotary mechanism of the central stalk subunits to proton translocation. Its function is as follows. This protein is part of the stalk that links CF(0) to CF(1). It either transmits conformational changes from CF(0) to CF(1) or is implicated in proton conduction. This Paulinella chromatophora protein is ATP synthase subunit delta, organellar chromatophore.